A 750-amino-acid chain; its full sequence is Elastin (750 aa).

An N-terminal signal peptide occupies residues 1-24; it reads ARQAAAPLLPGVLLLFSILPASQQ. A 4-hydroxyproline mark is found at proline 32, proline 67, proline 102, proline 176, proline 189, proline 192, and proline 211. The stretch at 83–127 is repeat 1; the sequence is GAGVGGLGAGLGAFPGAAFPGAASAAALKAAAKAGAGLGGVGGIG. The tract at residues 83-686 is 8 X tandem repeats; sequence GAGVGGLGAG…GVGGLGVGGL (604 aa). 7 tandem repeats follow at residues 219-262, 263-318, 319-393, 394-482, 483-554, 555-619, and 620-686. 7 positions are modified to 4-hydroxyproline: proline 276, proline 345, proline 363, proline 368, proline 441, proline 455, and proline 480. 4-hydroxyproline occurs at positions 576, 635, and 720. Cysteine 739 and cysteine 745 are oxidised to a cystine.

This sequence belongs to the elastin family. As to quaternary structure, the polymeric elastin chains are cross-linked together into an extensible 3D network. In terms of processing, elastin is formed through the cross-linking of its soluble precursor tropoelastin. Cross-linking is initiated through the action of lysyl oxidase on exposed lysines to form allysine. Subsequent spontaneous condensation reactions with other allysine or unmodified lysine residues result in various bi-, tri-, and tetrafunctional cross-links. The most abundant cross-links in mature elastin fibers are lysinonorleucine, allysine aldol, desmosine, and isodesmosine. Post-translationally, hydroxylated on proline residues. Hydroxylation on proline residues within the sequence motif, GXPG, is most likely to be 4-hydroxy as this fits the requirement for 4-hydroxylation in vertebrates.

It localises to the secreted. The protein localises to the extracellular space. It is found in the extracellular matrix. Functionally, major structural protein of tissues such as aorta and nuchal ligament, which must expand rapidly and recover completely. In Gallus gallus (Chicken), this protein is Elastin (ELN).